Here is a 438-residue protein sequence, read N- to C-terminus: UDP-N-acetylmuramoylalanine--D-glutamate ligase (438 aa).

Gly-112–Thr-118 lines the ATP pocket.

The protein belongs to the MurCDEF family.

The protein localises to the cytoplasm. The catalysed reaction is UDP-N-acetyl-alpha-D-muramoyl-L-alanine + D-glutamate + ATP = UDP-N-acetyl-alpha-D-muramoyl-L-alanyl-D-glutamate + ADP + phosphate + H(+). The protein operates within cell wall biogenesis; peptidoglycan biosynthesis. Cell wall formation. Catalyzes the addition of glutamate to the nucleotide precursor UDP-N-acetylmuramoyl-L-alanine (UMA). This chain is UDP-N-acetylmuramoylalanine--D-glutamate ligase, found in Sodalis glossinidius (strain morsitans).